The following is a 710-amino-acid chain: Solute carrier organic anion transporter family member 3A1 (710 aa).

M1 carries the N-acetylmethionine modification. The disordered stretch occupies residues 1–25 (MQAKKPGGSSGGGRSGELQGDEAQR). Over 1 to 40 (MQAKKPGGSSGGGRSGELQGDEAQRNKKKKKKVSCFSNIK) the chain is Cytoplasmic. Residues 41–60 (IFLVSECALMLAQGTVGAYL) traverse the membrane as a helical segment. Residues 61–79 (VSVLTTLERRFNLQSADVG) are Extracellular-facing. Residues 80–100 (VIASSFEIGNLALILFVSYFG) traverse the membrane as a helical segment. The Cytoplasmic portion of the chain corresponds to 101–106 (ARGHRP). A helical transmembrane segment spans residues 107–131 (RLIGCGGIVMALGALLSALPEFLTH). Residues 132 to 174 (QYKYEAGEIRWGAEGRDVCAANGSGGDQGPDPDLICRSRTATN) are Extracellular-facing. N-linked (GlcNAc...) asparagine glycosylation is present at N153. The helical transmembrane segment at 175–203 (MMYLLLIGAQVLLGIGATPVQPLGVSYID) threads the bilayer. Residues 204-222 (DHVRRKDSSLYIGILFTML) are Cytoplasmic-facing. Residues 223–243 (VFGPACGFILGSFCTKIYVDA) form a helical membrane-spanning segment. Over 244 to 261 (VFIDTSNLDITPDDPRWI) the chain is Extracellular. The helical transmembrane segment at 262-286 (GAWWGGFLLCGALLFFSSVLMFGFP) threads the bilayer. Residues 287-344 (QSLPPHSDPALESEQAMLPEREYERPKPSNGVLRHPLEPDSSASCFQQLRVIPKVTKH) are Cytoplasmic-facing. The chain crosses the membrane as a helical span at residues 345-366 (LLSNPVFTCIILAACMEIAVVA). The Extracellular segment spans residues 367-386 (GFAAFLGKYLEQQFNLTTSS). N381 carries N-linked (GlcNAc...) asparagine glycosylation. The helical transmembrane segment at 387 to 410 (ANQLLGMTAIPCACLGIFLGGLLV) threads the bilayer. Topologically, residues 411–414 (KKLS) are cytoplasmic. A helical membrane pass occupies residues 415-438 (LSALGAIRMAMLVNLVSTACYVSF). Topologically, residues 439 to 539 (LFLGCDTGPV…PGCQEAFLTF (101 aa)) are extracellular. A glycan (N-linked (GlcNAc...) asparagine) is linked at N457. Residues 465–513 (LDPYSSCNKNCECQTDSFTPVCGADGITYLSACFAGCNSTNLTGCACLM) form the Kazal-like domain. Intrachain disulfides connect C471/C501, C477/C497, and C486/C511. Residues N502, N505, and N519 are each glycosylated (N-linked (GlcNAc...) asparagine). The chain crosses the membrane as a helical span at residues 540–562 (LCVMCVCSMIGAMAQTPSVIILI). Over 563-571 (RTVSPELKS) the chain is Cytoplasmic. Residues 572–597 (YALGVLFLLLRLLGFIPPPLIFGAGI) traverse the membrane as a helical segment. The Extracellular segment spans residues 598–630 (DSTCLFWSTFCGEQGACALYDNVAYRYLYVSIA). Residues 631 to 648 (IALKSFAFLLYTTTWQCL) traverse the membrane as a helical segment. The Cytoplasmic segment spans residues 649-705 (RKNYKRYIKNHEGGLSTSEFFASTLTLDNLGRDPVPANQTHRTKFIYNLEDHEWCEN).

Belongs to the organo anion transporter (TC 2.A.60) family.

Its subcellular location is the basolateral cell membrane. It localises to the apical cell membrane. The protein localises to the basal cell membrane. It catalyses the reaction L-thyroxine(out) = L-thyroxine(in). The enzyme catalyses prostaglandin E1(out) = prostaglandin E1(in). It carries out the reaction prostaglandin E2(out) = prostaglandin E2(in). The catalysed reaction is prostaglandin F2alpha(out) = prostaglandin F2alpha(in). It catalyses the reaction (5Z,8Z,11Z,14Z)-eicosatetraenoate(out) = (5Z,8Z,11Z,14Z)-eicosatetraenoate(in). The enzyme catalyses taurocholate(out) = taurocholate(in). It carries out the reaction glycocholate(out) = glycocholate(in). The catalysed reaction is estrone 3-sulfate(out) = estrone 3-sulfate(in). It catalyses the reaction argipressin(out) = argipressin(in). Functionally, putative organic anion antiporter with apparent broad substrate specificity. Recognizes various substrates including thyroid hormone L-thyroxine, prostanoids such as prostaglandin E1 and E2, bile acids such as taurocholate, glycolate and glycochenodeoxycholate and peptide hormones such as L-arginine vasopressin, likely operating in a tissue-specific manner. The transport mechanism, its electrogenicity and potential tissue-specific counterions remain to be elucidated. This Bos taurus (Bovine) protein is Solute carrier organic anion transporter family member 3A1 (SLCO3A1).